A 226-amino-acid polypeptide reads, in one-letter code: Deoxyribose-phosphate aldolase (226 aa).

Asp-95 functions as the Proton donor/acceptor in the catalytic mechanism. The Schiff-base intermediate with acetaldehyde role is filled by Lys-157. Catalysis depends on Lys-186, which acts as the Proton donor/acceptor.

Belongs to the DeoC/FbaB aldolase family. DeoC type 1 subfamily.

It localises to the cytoplasm. It catalyses the reaction 2-deoxy-D-ribose 5-phosphate = D-glyceraldehyde 3-phosphate + acetaldehyde. It participates in carbohydrate degradation; 2-deoxy-D-ribose 1-phosphate degradation; D-glyceraldehyde 3-phosphate and acetaldehyde from 2-deoxy-alpha-D-ribose 1-phosphate: step 2/2. With respect to regulation, partially inhibited by acetaldehyde. After incubation for 2, 4 and 6 hours in 300 mM acetaldehyde at 25 degrees Celsius, retains approximately 61.32%, 42.33% and 34.73% of the initial 2-deoxy-D-ribose-5-phosphate (DR5P) cleavage activity, respectively. In terms of biological role, catalyzes a reversible aldol reaction between acetaldehyde and D-glyceraldehyde 3-phosphate to generate 2-deoxy-D-ribose 5-phosphate. Functionally, in vitro, DERA can catalyze the aldol condensation of chloroacetaldehyde (CHAD) and acetaldehyde (ACD), yielding (S)-4-chloro-3-hydroxybutanal ((S)-CHB), which can combine with another aldehyde to form (3R,5S)-6-chloro-2,4,6-trideoxyhexapyranose (CTeHP), a key intermediate for statin drugs. This is Deoxyribose-phosphate aldolase from Pseudomonas syringae pv. syringae (strain B728a).